The sequence spans 64 residues: Kappa-lycotoxin-Os1a (64 aa).

4 disulfide bridges follow: C10–C26, C17–C56, C19–C42, and C28–C40.

This sequence belongs to the neurotoxin 04 (omega-agtx) family. 01 (type I omega-agtx) subfamily. As to expression, expressed by the venom gland.

It is found in the secreted. Functionally, insecticidal to house crickets. It induces an excitatory slow-onset impact that leads to irreversible spastic paralysis. It also modifies human voltage-gated potassium channel Kv1.5/KCNA5. Most likely, it binds to the voltage-sensing domain of the channel, suggesting it does not block the pore but prevents its opening at physiological membrane potentials. The recombinant peptide binds to the channel in an irreversible manner and slows down the hKv1.5 current activation kinetics. It is not toxic to mice, when intracranially injected (at 0.5 ug/g mouse). The chain is Kappa-lycotoxin-Os1a from Oculicosa supermirabilis (Central Asian wolf-spider).